A 439-amino-acid polypeptide reads, in one-letter code: Xylose isomerase (439 aa).

Residues H99 and D102 contribute to the active site. E230, E266, H269, D294, D305, D307, and D337 together coordinate Mg(2+).

It belongs to the xylose isomerase family. As to quaternary structure, homotetramer. Mg(2+) serves as cofactor.

The protein localises to the cytoplasm. It carries out the reaction alpha-D-xylose = alpha-D-xylulofuranose. In Shouchella clausii (strain KSM-K16) (Alkalihalobacillus clausii), this protein is Xylose isomerase.